The following is a 258-amino-acid chain: Methanol--corrinoid protein (258 aa).

The B12-binding N-terminal domain occupies 30 to 124 (AEELYPKDEL…NSGATPKTKG (95 aa)). Residues 123-248 (KGTVVCHVAE…DAIIAGTTDV (126 aa)) form the B12-binding domain. H136 lines the methylcob(III)alamin pocket.

It belongs to the methylamine corrinoid protein family. As to quaternary structure, heterotetramer, composed of 2 MtaB and 2 MtaC subunits.

Its function is as follows. Harbors a corrinoid prosthetic group and acts as a methyl group carrier in methanogenesis in the methanol pathway. The methyl group of methanol is first transferred to the corrinoid prosthetic group of MtaC in the cob(I)amide oxidation state. This reaction is mediated by MtaB. The methyl group from MtaC is then transferred to coenzyme M by MtaA. This Methanosarcina barkeri (strain Fusaro / DSM 804) protein is Methanol--corrinoid protein (mtaC).